The following is a 331-amino-acid chain: DNA-directed RNA polymerase subunit alpha (331 aa).

The interval 1 to 235 (MTMHIRWRGM…KHLNPFVQYR (235 aa)) is alpha N-terminal domain (alpha-NTD). Positions 255 to 331 (QLEAKLNMTL…GMRVPNQPLF (77 aa)) are alpha C-terminal domain (alpha-CTD).

Belongs to the RNA polymerase alpha chain family. As to quaternary structure, homodimer. The RNAP catalytic core consists of 2 alpha, 1 beta, 1 beta' and 1 omega subunit. When a sigma factor is associated with the core the holoenzyme is formed, which can initiate transcription.

It carries out the reaction RNA(n) + a ribonucleoside 5'-triphosphate = RNA(n+1) + diphosphate. Its function is as follows. DNA-dependent RNA polymerase catalyzes the transcription of DNA into RNA using the four ribonucleoside triphosphates as substrates. This is DNA-directed RNA polymerase subunit alpha from Rhodopirellula baltica (strain DSM 10527 / NCIMB 13988 / SH1).